The following is a 103-amino-acid chain: Sperm-associated antigen 11A (103 aa).

The signal sequence occupies residues 1 to 24 (MRQRLLPSVTSLLLVALLFPGSSQ). N-linked (GlcNAc...) asparagine glycosylation occurs at Asn-29.

The protein belongs to the SPAG11 family.

The protein resides in the secreted. Functionally, has antimicrobial activity against E.coli. Plays a role in the defense response in the male reproductive tract, contributing to sperm maturation, storage and protection. This chain is Sperm-associated antigen 11A, found in Pan troglodytes (Chimpanzee).